The sequence spans 73 residues: Carboxysome shell vertex protein CsoS4B (73 aa).

A BMV domain is found at 1–68; it reads MVCTQRVAGL…TDLTIGGIID (68 aa).

The protein belongs to the CcmL/EutN family. CsoS4 subfamily. Homopentamer.

It is found in the carboxysome. Probably forms vertices in the carboxysome, a polyhedral inclusion where RuBisCO (ribulose bisphosphate carboxylase, cbbL-cbbS) is sequestered. Has been modeled to induce curvature upon insertion into an otherwise flat hexagonal layer of major carboxysome subunits. Has not been identified in purified carboxysomes; it is expected to be present in very low amounts. In Prochlorococcus marinus subsp. pastoris (strain CCMP1986 / NIES-2087 / MED4), this protein is Carboxysome shell vertex protein CsoS4B.